We begin with the raw amino-acid sequence, 205 residues long: ATP phosphoribosyltransferase (205 aa).

This sequence belongs to the ATP phosphoribosyltransferase family. Short subfamily. As to quaternary structure, heteromultimer composed of HisG and HisZ subunits.

It is found in the cytoplasm. The enzyme catalyses 1-(5-phospho-beta-D-ribosyl)-ATP + diphosphate = 5-phospho-alpha-D-ribose 1-diphosphate + ATP. It participates in amino-acid biosynthesis; L-histidine biosynthesis; L-histidine from 5-phospho-alpha-D-ribose 1-diphosphate: step 1/9. Its function is as follows. Catalyzes the condensation of ATP and 5-phosphoribose 1-diphosphate to form N'-(5'-phosphoribosyl)-ATP (PR-ATP). Has a crucial role in the pathway because the rate of histidine biosynthesis seems to be controlled primarily by regulation of HisG enzymatic activity. The chain is ATP phosphoribosyltransferase from Staphylococcus saprophyticus subsp. saprophyticus (strain ATCC 15305 / DSM 20229 / NCIMB 8711 / NCTC 7292 / S-41).